Here is a 122-residue protein sequence, read N- to C-terminus: Large ribosomal subunit protein uL14 (122 aa).

It belongs to the universal ribosomal protein uL14 family. Part of the 50S ribosomal subunit. Forms a cluster with proteins L3 and L19. In the 70S ribosome, L14 and L19 interact and together make contacts with the 16S rRNA in bridges B5 and B8.

Its function is as follows. Binds to 23S rRNA. Forms part of two intersubunit bridges in the 70S ribosome. This is Large ribosomal subunit protein uL14 from Mycoplasmopsis agalactiae (strain NCTC 10123 / CIP 59.7 / PG2) (Mycoplasma agalactiae).